The primary structure comprises 263 residues: MPLPVALQTRLAKRGILKHLEPEPEEEIIAEDYDDDPVDYEATRIEGLPPSWYKVFDPSCGLPYYWNVETDLVSWLSPHDPNFVVSKSAKKLRNSNADAEDKSERNLEKVDRNHEKSDRSHEKPDRSHEKADRNHEKSDRERERNYDKVDRERDRDRERERAFDKADREDGKDRRHHRREELAPYPKNKKATSRKDEELDPMDPSSYSDAPRGTWSTGLPKRNEAKTGADTTAAGPLFQQRPYPSPGAVLRANAEASRSKQQD.

The region spanning 46-80 (EGLPPSWYKVFDPSCGLPYYWNVETDLVSWLSPHD) is the WW domain. The disordered stretch occupies residues 94–263 (NSNADAEDKS…AEASRSKQQD (170 aa)). Basic and acidic residues predominate over residues 99–173 (AEDKSERNLE…DKADREDGKD (75 aa)). The 1-1; approximate repeat unit spans residues 104-110 (ERNLEKV). A 5 X 7 AA approximate tandem repeats of D-R-[NS]-H-E-K-S region spans residues 104 to 138 (ERNLEKVDRNHEKSDRSHEKPDRSHEKADRNHEKS). The 1-2 repeat unit spans residues 111-117 (DRNHEKS). Residues 118-124 (DRSHEKP) form a 1-3; approximate repeat. One copy of the 1-4; approximate repeat lies at 125-131 (DRSHEKA). 10 tandem repeats follow at residues 132–138 (DRNHEKS), 139–140 (DR), 141–142 (ER), 143–144 (ER), 150–151 (DR), 152–153 (ER), 154–155 (DR), 156–157 (DR), 158–159 (ER), and 160–161 (ER). The 3 X 2 AA tandem repeats of [DE]-R stretch occupies residues 139 to 144 (DRERER). The segment at 150-161 (DRERDRDRERER) is 6 X 2 AA tandem repeats of [DE]-R. The important for interaction with TXNL4A stretch occupies residues 243 to 253 (YPSPGAVLRAN). Ser245 carries the phosphoserine modification.

Interacts with POU3F2/Brn-2, ATXN1, TXNL4A, HTT and AR. Interaction with ATXN1 correlates positively with the length of the polyglutamine tract. Interacts with RNA polymerase II large subunit in a phosphorylation-dependent manner. Forms a ternary complex with ATXN1 mutant and phosphorylated RNA polymerase II. Interacts (via C-terminus) with TXNL4A and CD2BP2. Interacts (via WW domain) with ATN1 and SF3B1, and may interact with additional splice factors. Interacts (via WW domain) with WBP11; Leading to reduce interaction between PQBP1 and TXNL4A. Interacts with CAPRIN1. Interacts with DDX1. Interacts with SFPQ. Interacts with KHSRP.

The protein localises to the nucleus. The protein resides in the nucleus speckle. It is found in the cytoplasmic granule. In terms of biological role, intrinsically disordered protein that acts as a scaffold, and which is involved in different processes, such as pre-mRNA splicing, transcription regulation, innate immunity and neuron development. Interacts with splicing-related factors via the intrinsically disordered region and regulates alternative splicing of target pre-mRNA species. May suppress the ability of POU3F2 to transactivate the DRD1 gene in a POU3F2 dependent manner. Can activate transcription directly or via association with the transcription machinery. May be involved in ATXN1 mutant-induced cell death. The interaction with ATXN1 mutant reduces levels of phosphorylated RNA polymerase II large subunit. Involved in the assembly of cytoplasmic stress granule, possibly by participating in the transport of neuronal RNA granules. Also acts as an innate immune sensor of infection by retroviruses, by detecting the presence of reverse-transcribed DNA in the cytosol. Directly binds retroviral reverse-transcribed DNA in the cytosol and interacts with CGAS, leading to activate the cGAS-STING signaling pathway, triggering type-I interferon production. The chain is Polyglutamine-binding protein 1 (Pqbp1) from Rattus norvegicus (Rat).